We begin with the raw amino-acid sequence, 313 residues long: Protein-methionine-sulfoxide reductase catalytic subunit MsrP (313 aa).

A signal peptide (tat-type signal) is located at residues 1 to 44 (MARWRPDMAEREATPEALYLRRREFLALGAAGAVGLLVARGARA). Residues N76, 79 to 80 (YE), C134, T169, N217, R222, and 233 to 235 (GAK) each bind Mo-molybdopterin.

This sequence belongs to the MsrP family. Heterodimer of a catalytic subunit (MsrP) and a heme-binding subunit (MsrQ). Requires Mo-molybdopterin as cofactor. Post-translationally, predicted to be exported by the Tat system. The position of the signal peptide cleavage has not been experimentally proven.

It is found in the periplasm. The enzyme catalyses L-methionyl-[protein] + a quinone + H2O = L-methionyl-(S)-S-oxide-[protein] + a quinol. It carries out the reaction L-methionyl-[protein] + a quinone + H2O = L-methionyl-(R)-S-oxide-[protein] + a quinol. Its function is as follows. Part of the MsrPQ system that repairs oxidized periplasmic proteins containing methionine sulfoxide residues (Met-O), using respiratory chain electrons. Thus protects these proteins from oxidative-stress damage caused by reactive species of oxygen and chlorine generated by the host defense mechanisms. MsrPQ is essential for the maintenance of envelope integrity under bleach stress, rescuing a wide series of structurally unrelated periplasmic proteins from methionine oxidation. The catalytic subunit MsrP is non-stereospecific, being able to reduce both (R-) and (S-) diastereoisomers of methionine sulfoxide. In Anaeromyxobacter sp. (strain K), this protein is Protein-methionine-sulfoxide reductase catalytic subunit MsrP.